Consider the following 380-residue polypeptide: Deoxyguanosinetriphosphate triphosphohydrolase-like protein (380 aa).

The segment at 1–28 (MYAPYATMPDRSRGRAVPEEESSFRSPF) is disordered. Positions 62–198 (RLTHSIEVGQ…AALADDIAYN (137 aa)) constitute an HD domain.

Belongs to the dGTPase family. Type 2 subfamily.

This Ruegeria sp. (strain TM1040) (Silicibacter sp.) protein is Deoxyguanosinetriphosphate triphosphohydrolase-like protein.